A 415-amino-acid polypeptide reads, in one-letter code: S-inosyl-L-homocysteine hydrolase (415 aa).

Substrate-binding residues include Asp123 and Glu148. 149-151 (TTT) is a binding site for NAD(+). Substrate contacts are provided by Lys178 and Asp182. NAD(+) contacts are provided by residues Asn183, 212–217 (GYGWCG), Glu235, 291–293 (AGH), and Asn337.

The protein belongs to the adenosylhomocysteinase family. In terms of assembly, exists both as a homotetramer and a homodimer, in a 4:1 ratio. NAD(+) serves as cofactor.

It localises to the cytoplasm. It carries out the reaction S-inosyl-L-homocysteine + H2O = L-homocysteine + inosine. It functions in the pathway amino-acid biosynthesis; S-adenosyl-L-methionine biosynthesis. In terms of biological role, catalyzes the hydrolysis of S-inosyl-L-homocysteine (SIH) to L-homocysteine (Hcy) and inosine. Likely functions in a S-adenosyl-L-methionine (SAM) recycling pathway from S-adenosyl-L-homocysteine (SAH) produced from SAM-dependent methylation reactions. Can also catalyze the reverse reaction in vitro, i.e. the synthesis of SIH from Hcy and inosine. Is specific for SIH and inosine as it is unable to either hydrolyze SAH or synthesize SAH from adenosine and Hcy. The protein is S-inosyl-L-homocysteine hydrolase of Methanocaldococcus jannaschii (strain ATCC 43067 / DSM 2661 / JAL-1 / JCM 10045 / NBRC 100440) (Methanococcus jannaschii).